Consider the following 244-residue polypeptide: 5-oxoprolinase subunit A (244 aa).

This sequence belongs to the LamB/PxpA family. In terms of assembly, forms a complex composed of PxpA, PxpB and PxpC.

It carries out the reaction 5-oxo-L-proline + ATP + 2 H2O = L-glutamate + ADP + phosphate + H(+). Its function is as follows. Catalyzes the cleavage of 5-oxoproline to form L-glutamate coupled to the hydrolysis of ATP to ADP and inorganic phosphate. This is 5-oxoprolinase subunit A from Salmonella agona (strain SL483).